The chain runs to 313 residues: Ribosomal RNA small subunit methyltransferase H (313 aa).

S-adenosyl-L-methionine is bound by residues 33–35 (GGH), aspartate 53, phenylalanine 80, aspartate 102, and glutamine 109. The tract at residues 291–313 (SDEEMRANPRAQSAKLRAAEKIR) is disordered.

Belongs to the methyltransferase superfamily. RsmH family.

The protein localises to the cytoplasm. The catalysed reaction is cytidine(1402) in 16S rRNA + S-adenosyl-L-methionine = N(4)-methylcytidine(1402) in 16S rRNA + S-adenosyl-L-homocysteine + H(+). Specifically methylates the N4 position of cytidine in position 1402 (C1402) of 16S rRNA. This chain is Ribosomal RNA small subunit methyltransferase H, found in Heliobacterium modesticaldum (strain ATCC 51547 / Ice1).